The chain runs to 195 residues: Probable peroxygenase 4 (195 aa).

In terms of domain architecture, EF-hand spans 14–49; it reads EEDNFLQRHVAFFDRNKDGIVYPSETFQGFRAIGCG. H22 provides a ligand contact to heme. D27, N29, D31, and E38 together coordinate Ca(2+). The Proline-knot signature appears at 70 to 79; that stretch reads PGKGFSIWFP. At S177 the chain carries Phosphoserine.

This sequence belongs to the caleosin family. In terms of assembly, homodimer. It depends on heme b as a cofactor. Ca(2+) serves as cofactor. Expressed in roots, leaves, stems, shoots, flowers and germinated seeds. Barely detected in dry seeds prior to germination. Preferentially expressed in vascular bundles and in guard cells.

The protein resides in the lipid droplet. The catalysed reaction is RH + ROOH = ROH + ROH.. Calcium-binding peroxygenase involved in the degradation of storage lipid in oil bodies. May be involved in the interaction between oil bodies and vacuoles during seed germination. Acts as a negative regulator of abscisic acid responses in non-seed tissues. This Arabidopsis thaliana (Mouse-ear cress) protein is Probable peroxygenase 4 (PXG4).